A 305-amino-acid polypeptide reads, in one-letter code: MQQPHIPVMLNEMLKFLAPKAGESYLDCTFGAGGYSKALLENCDCYVTALDRDPNVIKKAEEIKHNYKDRFDFVETNFGNCFAKLESKKFDGIVLDLGVSSMQLDIPDRGFSFLHDGPLDMRMSGQGLSAEEFINTAEEKDLADVIYKYGDETFSRRIAKKIVEVRKAARIDSTGKLADIVHSCIGFRKGKIDPATKTFQAIRIYINNELGELEQFLANVKNILKKDGRLVVVSFHSLEDRIVKNFFKENSEKPVARSKYAKEDIMLNPDKWLKIITNKAEIPSDKEISLNVRARSAKLRAAKKI.

Residues 33–35 (GGY), D51, F82, D96, and Q103 contribute to the S-adenosyl-L-methionine site.

Belongs to the methyltransferase superfamily. RsmH family.

It is found in the cytoplasm. The enzyme catalyses cytidine(1402) in 16S rRNA + S-adenosyl-L-methionine = N(4)-methylcytidine(1402) in 16S rRNA + S-adenosyl-L-homocysteine + H(+). In terms of biological role, specifically methylates the N4 position of cytidine in position 1402 (C1402) of 16S rRNA. The sequence is that of Ribosomal RNA small subunit methyltransferase H from Rickettsia bellii (strain OSU 85-389).